Reading from the N-terminus, the 66-residue chain is Toxin Boma6e (66 aa).

The LCN-type CS-alpha/beta domain maps to 2 to 64 (RDAYIAQNYN…VPLKVQGKCH (63 aa)). Intrachain disulfides connect cysteine 12–cysteine 63, cysteine 22–cysteine 46, and cysteine 26–cysteine 48.

Belongs to the long (3 C-C) scorpion toxin superfamily. Only three disulfide bridges can be formed, because only seven cysteines are present. As to expression, expressed by the venom gland.

It localises to the secreted. Binds voltage-independently at site-3 of sodium channels (Nav) and inhibits the inactivation of the activated channels, thereby blocking neuronal transmission. This is Toxin Boma6e from Buthus occitanus mardochei (Moroccan scorpion).